Consider the following 265-residue polypeptide: Hydroxyethylthiazole kinase (265 aa).

Met-55 is a binding site for substrate. The ATP site is built by Arg-130 and Ser-176. Residue Gly-203 coordinates substrate.

This sequence belongs to the Thz kinase family. Requires Mg(2+) as cofactor.

The enzyme catalyses 5-(2-hydroxyethyl)-4-methylthiazole + ATP = 4-methyl-5-(2-phosphooxyethyl)-thiazole + ADP + H(+). It functions in the pathway cofactor biosynthesis; thiamine diphosphate biosynthesis; 4-methyl-5-(2-phosphoethyl)-thiazole from 5-(2-hydroxyethyl)-4-methylthiazole: step 1/1. Catalyzes the phosphorylation of the hydroxyl group of 4-methyl-5-beta-hydroxyethylthiazole (THZ). This is Hydroxyethylthiazole kinase from Leptospira interrogans serogroup Icterohaemorrhagiae serovar Lai (strain 56601).